Consider the following 437-residue polypeptide: GTPase Der (437 aa).

2 consecutive EngA-type G domains span residues 3–168 (PLIA…PCPE) and 178–353 (IKLA…LNRR). GTP-binding positions include 9–16 (GRPNVGKS), 56–60 (DTGGY), 120–123 (NKVD), 184–191 (GRPNVGKS), 231–235 (DTAGL), and 296–299 (NKWD). Positions 354–437 (QKISTSNLNR…IPITMRFLRK (84 aa)) constitute a KH-like domain.

This sequence belongs to the TRAFAC class TrmE-Era-EngA-EngB-Septin-like GTPase superfamily. EngA (Der) GTPase family. Associates with the 50S ribosomal subunit.

Functionally, GTPase that plays an essential role in the late steps of ribosome biogenesis. The polypeptide is GTPase Der (Chlorobaculum tepidum (strain ATCC 49652 / DSM 12025 / NBRC 103806 / TLS) (Chlorobium tepidum)).